A 356-amino-acid polypeptide reads, in one-letter code: Fructose import permease protein FruF (356 aa).

7 helical membrane passes run 25–45, 77–97, 113–133, 180–200, 231–251, 268–290, and 308–328; these read IVAF…FLAL, LVIS…VAGA, ILIA…LVSF, FILG…LVGL, ILFL…LFAT, MYAI…SLAG, and LGVN…VICV.

It belongs to the binding-protein-dependent transport system permease family. In terms of assembly, the complex is composed of an ATP-binding protein (FruK), two transmembrane proteins (FruF and FruG) and a solute-binding protein (FruE).

It localises to the cell membrane. Part of the high-affinity ABC transporter complex FruEKFG involved in fructose uptake. Can also transport ribose and xylose, with lower affinity. Probably responsible for the translocation of the substrate across the membrane. This is Fructose import permease protein FruF from Bifidobacterium longum (strain NCC 2705).